The sequence spans 151 residues: Probable cGMP 3',5'-cyclic phosphodiesterase subunit delta (151 aa).

It belongs to the PDE6D/unc-119 family. Interacts with Pde6.

The protein localises to the nucleus. It localises to the cytoplasm. The polypeptide is Probable cGMP 3',5'-cyclic phosphodiesterase subunit delta (Drosophila sechellia (Fruit fly)).